The following is a 410-amino-acid chain: LL-diaminopimelate aminotransferase (410 aa).

Positions 15 and 42 each coordinate substrate. Pyridoxal 5'-phosphate is bound by residues Y72, 108 to 109, Y132, N188, Y219, and 247 to 249; these read AK and SFS. Positions 109, 132, and 188 each coordinate substrate. K250 bears the N6-(pyridoxal phosphate)lysine mark. 2 residues coordinate pyridoxal 5'-phosphate: R258 and N293. Residues N293 and R389 each contribute to the substrate site.

Belongs to the class-I pyridoxal-phosphate-dependent aminotransferase family. LL-diaminopimelate aminotransferase subfamily. In terms of assembly, homodimer. It depends on pyridoxal 5'-phosphate as a cofactor.

The catalysed reaction is (2S,6S)-2,6-diaminopimelate + 2-oxoglutarate = (S)-2,3,4,5-tetrahydrodipicolinate + L-glutamate + H2O + H(+). It functions in the pathway amino-acid biosynthesis; L-lysine biosynthesis via DAP pathway; LL-2,6-diaminopimelate from (S)-tetrahydrodipicolinate (aminotransferase route): step 1/1. Functionally, involved in the synthesis of meso-diaminopimelate (m-DAP or DL-DAP), required for both lysine and peptidoglycan biosynthesis. Catalyzes the direct conversion of tetrahydrodipicolinate to LL-diaminopimelate. The sequence is that of LL-diaminopimelate aminotransferase from Bacteroides thetaiotaomicron (strain ATCC 29148 / DSM 2079 / JCM 5827 / CCUG 10774 / NCTC 10582 / VPI-5482 / E50).